The following is a 91-amino-acid chain: Probable Fe(2+)-trafficking protein (91 aa).

This sequence belongs to the Fe(2+)-trafficking protein family.

Its function is as follows. Could be a mediator in iron transactions between iron acquisition and iron-requiring processes, such as synthesis and/or repair of Fe-S clusters in biosynthetic enzymes. This Xanthomonas euvesicatoria pv. vesicatoria (strain 85-10) (Xanthomonas campestris pv. vesicatoria) protein is Probable Fe(2+)-trafficking protein.